The sequence spans 89 residues: Large ribosomal subunit protein bL27 (89 aa).

The tract at residues 1-20 is disordered; that stretch reads MAHKKAGGSSRNGRDSAGRR.

It belongs to the bacterial ribosomal protein bL27 family.

The chain is Large ribosomal subunit protein bL27 from Rhizorhabdus wittichii (strain DSM 6014 / CCUG 31198 / JCM 15750 / NBRC 105917 / EY 4224 / RW1) (Sphingomonas wittichii).